The primary structure comprises 149 residues: Calmodulin, striated muscle (149 aa).

EF-hand domains are found at residues 8-43 (EQIAEFKEAFSLFDRDGDGCITTMELGTVMRSLGQN), 44-79 (PTEAELQDMVGEVDADGSGTIDFPEFLSLMARKMRD), 81-116 (DSEEEIREAFRVFDKDGNGYISAAELRHVMTNLGEK), and 117-149 (LTDEEVDEMIKEADCNNDGQVNYEEFVRMMTEK). 15 residues coordinate Ca(2+): Asp21, Asp23, Asp25, Cys27, Glu32, Asp57, Asp59, Ser61, Thr63, Glu68, Asp94, Asp96, Asn98, Tyr100, and Glu105. Lys116 bears the N6,N6,N6-trimethyllysine mark. Residues Asp130, Asn132, Asp134, Gln136, and Glu141 each contribute to the Ca(2+) site.

Belongs to the calmodulin family.

This Gallus gallus (Chicken) protein is Calmodulin, striated muscle (CCM1).